The following is a 210-amino-acid chain: Resolvase (210 aa).

The 145-residue stretch at 6 to 150 (VARVYLRVSS…EDRRERQRQG (145 aa)) folds into the Resolvase/invertase-type recombinase catalytic domain. S14 functions as the O-(5'-phospho-DNA)-serine intermediate in the catalytic mechanism. Positions 191–210 (GVSVSQVKRVWAQNQTKDKV) form a DNA-binding region, H-T-H motif.

The protein belongs to the site-specific recombinase resolvase family.

Functionally, site-specific recombination protein. The sequence is that of Resolvase (stbA) from Pseudomonas syringae pv. tomato.